Here is a 103-residue protein sequence, read N- to C-terminus: uncharacterized protein (103 aa).

This is an uncharacterized protein from Bacillus subtilis (strain 168).